Here is a 119-residue protein sequence, read N- to C-terminus: Chorion class CA protein ERA.1 (119 aa).

An N-terminal signal peptide occupies residues 1–21 (MSTFAVLLLCVQACLIQNVYS). The left arm stretch occupies residues 22 to 55 (QCLGRVGPGGPPLGPYGGPLGGPGYGPVGYGGCG). Residues 56–103 (GYGGSGIGNVAVAGELPVAGSTGVMGQVPVIGAVEFAGPACAVGSVSI) are central domain. Residues 104-119 (SGACGPTCGCGGSPYY) are right arm.

This sequence belongs to the chorion protein family.

In terms of biological role, this protein is one of many from the eggshell of the silk moth. The sequence is that of Chorion class CA protein ERA.1 (ERA.1) from Bombyx mori (Silk moth).